The following is a 301-amino-acid chain: Acetyl-coenzyme A carboxylase carboxyl transferase subunit beta (301 aa).

Positions L25 to A294 constitute a CoA carboxyltransferase N-terminal domain.

The protein belongs to the AccD/PCCB family. Acetyl-CoA carboxylase is a heterohexamer composed of biotin carboxyl carrier protein (AccB), biotin carboxylase (AccC) and two subunits each of ACCase subunit alpha (AccA) and ACCase subunit beta (AccD).

Its subcellular location is the cytoplasm. It carries out the reaction N(6)-carboxybiotinyl-L-lysyl-[protein] + acetyl-CoA = N(6)-biotinyl-L-lysyl-[protein] + malonyl-CoA. It participates in lipid metabolism; malonyl-CoA biosynthesis; malonyl-CoA from acetyl-CoA: step 1/1. Component of the acetyl coenzyme A carboxylase (ACC) complex. Biotin carboxylase (BC) catalyzes the carboxylation of biotin on its carrier protein (BCCP) and then the CO(2) group is transferred by the transcarboxylase to acetyl-CoA to form malonyl-CoA. This chain is Acetyl-coenzyme A carboxylase carboxyl transferase subunit beta, found in Rhizobium etli (strain CIAT 652).